A 417-amino-acid polypeptide reads, in one-letter code: Lysosome-associated membrane glycoprotein 1 (417 aa).

The first 28 residues, 1–28, serve as a signal peptide directing secretion; that stretch reads MAAPGSARRPLLLLLLLLLLGLMHCASA. The segment at 29-194 is first lumenal domain; that stretch reads AMFMVKNGNG…SRGETRCEQD (166 aa). The Lumenal segment spans residues 29–382; the sequence is AMFMVKNGNG…EECLLDENSM (354 aa). 2 N-linked (GlcNAc...) asparagine glycosylation sites follow: N37 and N45. Cysteines 41 and 80 form a disulfide. Residue N62 is glycosylated (N-linked (GlcNAc...) (polylactosaminoglycan) asparagine). N-linked (GlcNAc...) asparagine glycosylation is found at N76, N84, N103, and N107. N-linked (GlcNAc...) (polylactosaminoglycan) asparagine glycans are attached at residues N121 and N130. Cysteines 155 and 191 form a disulfide. N165 and N181 each carry an N-linked (GlcNAc...) asparagine glycan. Residues 184-221 form a disordered region; it reads FSRGETRCEQDRPSPTTAPPAPPSPSPSPVPKSPSVDK. The interval 195–227 is hinge; the sequence is RPSPTTAPPAPPSPSPSPVPKSPSVDKYNVSGT. O-linked (GalNAc...) serine; partial glycosylation is present at S197. Residues T199 and T200 are each glycosylated (O-linked (GalNAc...) threonine). A compositionally biased stretch (pro residues) spans 199-215; it reads TTAPPAPPSPSPSPVPK. O-linked (GalNAc...) serine glycans are attached at residues S207, S209, and S211. N223 and N228 each carry an N-linked (GlcNAc...) (polylactosaminoglycan) asparagine glycan. The tract at residues 228–382 is second lumenal domain; sequence NGTCLLASMG…EECLLDENSM (155 aa). A disulfide bridge links C231 with C269. N-linked (GlcNAc...) asparagine glycans are attached at residues N241, N249, N261, N293, and N322. Residues C338 and C375 are joined by a disulfide bond. The chain crosses the membrane as a helical span at residues 383 to 410; it reads LIPIAVGGALAGLVLIVLIAYLVGRKRS. Over 411–417 the chain is Cytoplasmic; sequence HAGYQTI.

This sequence belongs to the LAMP family. Interacts with ABCB9; this interaction strongly stabilizes ABCB9 and protects ABCB9 against lysosomal degradation. Interacts with FURIN. Interacts with TMEM175; inhibiting the proton channel activity of TMEM175. As to quaternary structure, (Microbial infection) Interacts with Lassa virus protein glycoprotein. In terms of assembly, (Microbial infection) Interacts with mumps virus protein F; this interaction promotes protein F cleavage by FURIN. O- and N-glycosylated; some of the 18 N-linked glycans are polylactosaminoglycans. In terms of processing, (Microbial infection) The glycosylation of Asn-76 is essential for Lassa virus entry into cells.

Its subcellular location is the lysosome membrane. The protein localises to the endosome membrane. It is found in the late endosome membrane. It localises to the cell membrane. The protein resides in the cytolytic granule membrane. In terms of biological role, lysosomal membrane glycoprotein which plays an important role in lysosome biogenesis, lysosomal pH regulation, autophagy and cholesterol homeostasis. Acts as an important regulator of lysosomal lumen pH regulation by acting as a direct inhibitor of the proton channel TMEM175, facilitating lysosomal acidification for optimal hydrolase activity. Also plays an important role in NK-cells cytotoxicity. Mechanistically, participates in cytotoxic granule movement to the cell surface and perforin trafficking to the lytic granule. In addition, protects NK-cells from degranulation-associated damage induced by their own cytotoxic granule content. Presents carbohydrate ligands to selectins. Functionally, (Microbial infection) Acts as a receptor for Lassa virus glycoprotein. Also promotes fusion of the virus with host membrane in less acidic endosomes. (Microbial infection) Supports the FURIN-mediated cleavage of mumps virus fusion protein F by interacting with both FURIN and the unprocessed form but not the processed form of the viral protein F. This chain is Lysosome-associated membrane glycoprotein 1, found in Homo sapiens (Human).